A 313-amino-acid polypeptide reads, in one-letter code: Secretory carrier-associated membrane protein 4 (313 aa).

The interval 1 to 69 (MAGRSRYDNP…LPPEPADFYN (69 aa)) is disordered. Topologically, residues 1–148 (MAGRSRYDNP…EIPVHLQRTQ (148 aa)) are cytoplasmic. Positions 85–116 (MKTREKELLAKEAELNRREKEIKRREEAAARA) form a coiled coil. 4 helical membrane-spanning segments follow: residues 149 to 169 (YVAF…IICV), 181 to 201 (IWFL…YLWY), 216 to 236 (FGWF…AAVS), and 255 to 275 (LIGN…MFCL). At 276–313 (ESLLSMWVIQRVYLYFRGSGKEAEMKREAARSAARAAF) the chain is on the cytoplasmic side.

The protein belongs to the SCAMP family.

It is found in the cell membrane. Its subcellular location is the cytoplasmic vesicle. It localises to the secretory vesicle membrane. Its function is as follows. Probably involved in membrane trafficking. The protein is Secretory carrier-associated membrane protein 4 (SCAMP4) of Oryza sativa subsp. japonica (Rice).